Here is a 374-residue protein sequence, read N- to C-terminus: Queuine tRNA-ribosyltransferase (374 aa).

D89 acts as the Proton acceptor in catalysis. Substrate-binding positions include 89-93 (DSGGF), D143, Q187, and G214. Residues 245–251 (GVGKPED) are RNA binding. D264 serves as the catalytic Nucleophile. Residues 269-273 (TRNAR) are RNA binding; important for wobble base 34 recognition. Residues C302, C304, C307, and H333 each coordinate Zn(2+).

It belongs to the queuine tRNA-ribosyltransferase family. Homodimer. Within each dimer, one monomer is responsible for RNA recognition and catalysis, while the other monomer binds to the replacement base PreQ1. It depends on Zn(2+) as a cofactor.

It catalyses the reaction 7-aminomethyl-7-carbaguanine + guanosine(34) in tRNA = 7-aminomethyl-7-carbaguanosine(34) in tRNA + guanine. The protein operates within tRNA modification; tRNA-queuosine biosynthesis. In terms of biological role, catalyzes the base-exchange of a guanine (G) residue with the queuine precursor 7-aminomethyl-7-deazaguanine (PreQ1) at position 34 (anticodon wobble position) in tRNAs with GU(N) anticodons (tRNA-Asp, -Asn, -His and -Tyr). Catalysis occurs through a double-displacement mechanism. The nucleophile active site attacks the C1' of nucleotide 34 to detach the guanine base from the RNA, forming a covalent enzyme-RNA intermediate. The proton acceptor active site deprotonates the incoming PreQ1, allowing a nucleophilic attack on the C1' of the ribose to form the product. After dissociation, two additional enzymatic reactions on the tRNA convert PreQ1 to queuine (Q), resulting in the hypermodified nucleoside queuosine (7-(((4,5-cis-dihydroxy-2-cyclopenten-1-yl)amino)methyl)-7-deazaguanosine). The chain is Queuine tRNA-ribosyltransferase from Shewanella baltica (strain OS223).